The following is a 3132-amino-acid chain: Enniatin synthetase (3132 aa).

The condensation 1 stretch occupies residues 53 to 466 (ADDKQRAVGH…VEKVDMMTQE (414 aa)). The disordered stretch occupies residues 186–212 (NDEHPRQFETPDSSQATPEEDLQPNPS). Residues 495 to 887 (SQSPNKAAVA…GRMDSQVKIR (393 aa)) are adenylation 1. The interval 994 to 1013 (SQKTHSTPSQQSQAAISSGT) is disordered. A Carrier 1 domain is found at 1010–1086 (SSGTDTETKL…GLKAIVIGTS (77 aa)). Ser1047 is modified (O-(pantetheine 4'-phosphoryl)serine). The segment at 1105-1534 (SYAQNRMWFL…ETCISVLPLT (430 aa)) is condensation 2. The tract at residues 1563-1960 (FREQAAANPE…GRMDNQFKIR (398 aa)) is adenylation 2. An S-adenosyl-L-methionine-dependent N-methyltransferase region spans residues 2021 to 2177 (EGWQDHFESG…YLAEVIDGLI (157 aa)). 2 consecutive Carrier domains span residues 2504-2578 (FPIS…RQGL) and 2598-2672 (APRT…ESSH). O-(pantetheine 4'-phosphoryl)serine is present on residues Ser2538 and Ser2632. The tract at residues 2719–3124 (QDVYPSTQMQ…RHVLEEVCKT (406 aa)) is condensation 3.

The protein belongs to the NRP synthetase family. Requires pantetheine 4'-phosphate as cofactor.

It functions in the pathway antibiotic biosynthesis; enniatin biosynthesis. Functionally, nonribosomal peptide synthetase that synthesizes enniatin by coupling three D-hydroxycarboxylic acids and three L-amino acids via amide and ester bonds in an alternating fashion. Whereas ESYN1 can accept different amino acids as precursors (L-valine, L-isoleucine or L-leucine), only one species of D-hydroxycarboxylic acid can be found in natural enniatin isolates (D-hydroxyisovaleric acid, D-Hiv). D-Hiv stems from L-valine deanimation by a valine aminotransferase to 2-keto-isovaleric acid (2-Kiv), which becomes subsequently reduced by a keto-isovaleric acid reductase (KivR) to D-Hiv. This Fusarium oxysporum (Fusarium vascular wilt) protein is Enniatin synthetase.